Consider the following 944-residue polypeptide: E3 ubiquitin-protein ligase HACE1 (944 aa).

ANK repeat units follow at residues 23-55 (LPED…NSKF), 64-93 (VKRS…DPNY), 97-126 (SGCT…DVNI), 130-159 (EGLT…NVDV), 163-192 (MGQT…DINR), 196-226 (SGAT…YLPD), and 228-253 (NGVT…QHHP). One can recognise an HECT domain in the interval 609 to 944 (NCEKLKQGIA…HCGSYGYTMA (336 aa)). Catalysis depends on Cys-911, which acts as the Glycyl thioester intermediate.

Its subcellular location is the golgi apparatus. It is found in the golgi stack membrane. The protein localises to the cytoplasm. It localises to the endoplasmic reticulum. The enzyme catalyses S-ubiquitinyl-[E2 ubiquitin-conjugating enzyme]-L-cysteine + [acceptor protein]-L-lysine = [E2 ubiquitin-conjugating enzyme]-L-cysteine + N(6)-ubiquitinyl-[acceptor protein]-L-lysine.. It functions in the pathway protein modification; protein ubiquitination. In terms of biological role, E3 ubiquitin-protein ligase involved in Golgi membrane fusion and regulation of small GTPases. Acts as a regulator of Golgi membrane dynamics during the cell cycle: recruited to Golgi membrane by Rab proteins and regulates postmitotic Golgi membrane fusion. Acts by mediating ubiquitination during mitotic Golgi disassembly, ubiquitination serving as a signal for Golgi reassembly later, after cell division. This chain is E3 ubiquitin-protein ligase HACE1 (hace1), found in Xenopus laevis (African clawed frog).